A 229-amino-acid polypeptide reads, in one-letter code: MNIKAPVITIDGPSGSGKGTIAGILAKRLGWCLLDSGALYRLLAFAARNHGVDLTNEESLKLLAAHLDVQFVGATEGHPQRIILEGDDVTDDLRNEQVGSWASQVAALPAVRDALLQRQRAFQEPPGLVADGRDMGTVVFPEAPLKIFLTASAEERARRRYLQLKGKVDGVSLSSLLDEIRARDERDTQRAVAPLKPAADAIQLDSTELSIEQVLERIMSEIAIRDIAG.

12–20 is a binding site for ATP; sequence GPSGSGKGT.

Belongs to the cytidylate kinase family. Type 1 subfamily.

The protein localises to the cytoplasm. The enzyme catalyses CMP + ATP = CDP + ADP. It carries out the reaction dCMP + ATP = dCDP + ADP. The polypeptide is Cytidylate kinase (Pseudomonas fluorescens (strain SBW25)).